A 204-amino-acid chain; its full sequence is 3-isopropylmalate dehydratase small subunit (204 aa).

It belongs to the LeuD family. LeuD type 1 subfamily. Heterodimer of LeuC and LeuD.

It carries out the reaction (2R,3S)-3-isopropylmalate = (2S)-2-isopropylmalate. The protein operates within amino-acid biosynthesis; L-leucine biosynthesis; L-leucine from 3-methyl-2-oxobutanoate: step 2/4. In terms of biological role, catalyzes the isomerization between 2-isopropylmalate and 3-isopropylmalate, via the formation of 2-isopropylmaleate. The chain is 3-isopropylmalate dehydratase small subunit from Vesicomyosocius okutanii subsp. Calyptogena okutanii (strain HA).